Consider the following 787-residue polypeptide: Probable basic-leucine zipper transcription factor J (787 aa).

Over residues 18-90 the composition is skewed to low complexity; sequence NSNIHNNTHN…NNTQNTNNGT (73 aa). Disordered stretches follow at residues 18–95, 153–173, 186–306, 343–372, 401–441, and 473–507; these read NSNI…LTPL, LNLS…NNNP, LQSQ…NNNT, DSLL…IQTS, LSSA…NNSN, and ASSE…DEDQ. Composition is skewed to low complexity over residues 186–223, 235–258, 273–305, and 351–366; these read LQSQ…SSPI, SSPI…STSP, NNNN…LNNN, and NNNN…NNNN. Residues 473-483 are compositionally biased toward low complexity; it reads ASSESAQSESS. The 64-residue stretch at 549–612 folds into the bZIP domain; the sequence is ELKKQRRLVK…KALKKQLYSL (64 aa). The basic motif stretch occupies residues 551-603; sequence KKQRRLVKNREYASQSRSRRKIYVENIETKLQKTNQDCASIKSQLNSVKEENK. The leucine-zipper stretch occupies residues 605-612; sequence LKKQLYSL. Disordered regions lie at residues 723–747 and 763–787; these read SNYI…VVST and DKEV…SPLN. The segment covering 763-778 has biased composition (basic and acidic residues); that stretch reads DKEVPQKCKDSSDLKC.

It belongs to the bZIP family.

It localises to the nucleus. Its function is as follows. Probable transcriptional regulator. This Dictyostelium discoideum (Social amoeba) protein is Probable basic-leucine zipper transcription factor J (bzpJ).